Consider the following 225-residue polypeptide: Holliday junction branch migration complex subunit RuvA (225 aa).

A domain I region spans residues 1–71; it reads MISWINGELV…EDSDLLFGFT (71 aa). Residues 72-150 are domain II; that stretch reads SKDQKFFFIE…SKIQIEEEKG (79 aa). The segment at 151 to 161 is flexible linker; that stretch reads QEEFEITNPEI. Residues 161 to 225 are domain III; sequence IYKLMEDLQL…LDQGNSNLAR (65 aa).

This sequence belongs to the RuvA family. In terms of assembly, homotetramer. Forms an RuvA(8)-RuvB(12)-Holliday junction (HJ) complex. HJ DNA is sandwiched between 2 RuvA tetramers; dsDNA enters through RuvA and exits via RuvB. An RuvB hexamer assembles on each DNA strand where it exits the tetramer. Each RuvB hexamer is contacted by two RuvA subunits (via domain III) on 2 adjacent RuvB subunits; this complex drives branch migration. In the full resolvosome a probable DNA-RuvA(4)-RuvB(12)-RuvC(2) complex forms which resolves the HJ.

It is found in the cytoplasm. In terms of biological role, the RuvA-RuvB-RuvC complex processes Holliday junction (HJ) DNA during genetic recombination and DNA repair, while the RuvA-RuvB complex plays an important role in the rescue of blocked DNA replication forks via replication fork reversal (RFR). RuvA specifically binds to HJ cruciform DNA, conferring on it an open structure. The RuvB hexamer acts as an ATP-dependent pump, pulling dsDNA into and through the RuvAB complex. HJ branch migration allows RuvC to scan DNA until it finds its consensus sequence, where it cleaves and resolves the cruciform DNA. The chain is Holliday junction branch migration complex subunit RuvA from Prochlorococcus marinus (strain MIT 9215).